The following is a 272-amino-acid chain: Small ribosomal subunit protein uS2 (272 aa).

Residues Leu-251–Glu-272 are disordered. Low complexity predominate over residues Thr-253–Glu-264.

Belongs to the universal ribosomal protein uS2 family.

In Bifidobacterium adolescentis (strain ATCC 15703 / DSM 20083 / NCTC 11814 / E194a), this protein is Small ribosomal subunit protein uS2.